A 474-amino-acid polypeptide reads, in one-letter code: Glutamate--tRNA ligase (474 aa).

The 'HIGH' region signature appears at 9 to 19 (PSPTGYLHVGG). The 'KMSKS' region signature appears at 240 to 244 (KLSKR). Position 243 (Lys243) interacts with ATP.

The protein belongs to the class-I aminoacyl-tRNA synthetase family. Glutamate--tRNA ligase type 1 subfamily. In terms of assembly, monomer.

Its subcellular location is the cytoplasm. It catalyses the reaction tRNA(Glu) + L-glutamate + ATP = L-glutamyl-tRNA(Glu) + AMP + diphosphate. Catalyzes the attachment of glutamate to tRNA(Glu) in a two-step reaction: glutamate is first activated by ATP to form Glu-AMP and then transferred to the acceptor end of tRNA(Glu). The sequence is that of Glutamate--tRNA ligase from Vibrio parahaemolyticus serotype O3:K6 (strain RIMD 2210633).